The primary structure comprises 83 residues: UPF0346 protein M28_Spy0369 (83 aa).

It belongs to the UPF0346 family.

This Streptococcus pyogenes serotype M28 (strain MGAS6180) protein is UPF0346 protein M28_Spy0369.